Here is a 139-residue protein sequence, read N- to C-terminus: I-Kappa-B like protein N1 (139 aa).

ANK repeat units follow at residues 16–48 (NGENLLHAMCRHGNSLALSIIAQSINKNYQYLL), 54–87 (EGRKCIHIAAVMHKGQVATELIIILLNFGADVNG), and 92–122 (TGDTVLHIAVYLKDYYLAEWLCRRSGININA).

Belongs to the polydnaviridae I-Kappa-B-like protein family.

Suppresses the host immune response through NF-kappa-B inactivation. Possesses ankyrin repeat domain required for NF-kappa-B binding but lack the regulatory regions required for dissociation from NF-kappa-B and degradation. Therefore, prevents host NF-kappa-B release and subsequent activation. The protein is I-Kappa-B like protein N1 (N2) of Microplitis demolitor bracovirus (isolate Webb) (MdBV).